We begin with the raw amino-acid sequence, 98 residues long: Defensin-A1 (98 aa).

Positions 1–19 are cleaved as a signal peptide; sequence MQTLSFLLALLFLVAQTPA. Positions 20–62 are excised as a propeptide; that stretch reads QPTGEGEKGGTIQEPEATEAQDTAAVLMAAGAADGDDSDTKQL. Cystine bridges form between C67/C94, C69/C83, and C73/C93. Residues 97-98 constitute a propeptide that is removed on maturation; it reads IK.

This sequence belongs to the alpha-defensin family. Highly expressed in intestine, and expressed at lower levels in lung and spleen.

It is found in the secreted. Its function is as follows. Has antimicrobial activity. This chain is Defensin-A1, found in Ornithorhynchus anatinus (Duckbill platypus).